The primary structure comprises 282 residues: Pantothenate synthetase (282 aa).

Residue 30-37 coordinates ATP; that stretch reads MGYLHQGH. The active-site Proton donor is H37. A (R)-pantoate-binding site is contributed by Q61. Q61 serves as a coordination point for beta-alanine. Position 147–150 (147–150) interacts with ATP; the sequence is GQKD. Q153 provides a ligand contact to (R)-pantoate. ATP contacts are provided by residues V176 and 184 to 187; that span reads MSSR.

This sequence belongs to the pantothenate synthetase family. Homodimer.

It localises to the cytoplasm. It catalyses the reaction (R)-pantoate + beta-alanine + ATP = (R)-pantothenate + AMP + diphosphate + H(+). It participates in cofactor biosynthesis; (R)-pantothenate biosynthesis; (R)-pantothenate from (R)-pantoate and beta-alanine: step 1/1. Functionally, catalyzes the condensation of pantoate with beta-alanine in an ATP-dependent reaction via a pantoyl-adenylate intermediate. This Geotalea daltonii (strain DSM 22248 / JCM 15807 / FRC-32) (Geobacter daltonii) protein is Pantothenate synthetase.